A 388-amino-acid chain; its full sequence is Mannitol-1-phosphate 5-dehydrogenase (388 aa).

5–16 (AIQFGGGNIGRG) provides a ligand contact to NAD(+). Lys213 is an active-site residue.

The protein belongs to the mannitol dehydrogenase family. Monomer.

The catalysed reaction is D-mannitol 1-phosphate + NAD(+) = beta-D-fructose 6-phosphate + NADH + H(+). Its function is as follows. Catalyzes the NAD(H)-dependent interconversion of D-fructose 6-phosphate and D-mannitol 1-phosphate in the metabolism of mannitol. Has a strong preference for NADH over NADPH. In Aspergillus niger (strain ATCC MYA-4892 / CBS 513.88 / FGSC A1513), this protein is Mannitol-1-phosphate 5-dehydrogenase (mpdA).